The chain runs to 345 residues: Leucine-rich repeat and transmembrane domain-containing protein 1 (345 aa).

The first 27 residues, 1–27, serve as a signal peptide directing secretion; it reads MKGELLLFSSVIVLLQVVCSCPDKCYC. The LRRNT domain occupies 28-50; sequence QSSTNFVDCSQQGLAEIPSHLPP. Residues 28-288 lie on the Extracellular side of the membrane; the sequence is QSSTNFVDCS…PANLRHAIAT (261 aa). LRR repeat units lie at residues 51 to 72, 75 to 96, 99 to 120, 123 to 144, and 147 to 168; these read QTRT…AFRS, WLMT…AFHG, HLQV…LFHS, QLRE…LGET, and NLTI…LLES. Asparagine 104 carries an N-linked (GlcNAc...) asparagine glycan. Asparagine 147 carries an N-linked (GlcNAc...) asparagine glycan. Residues 180–234 enclose the LRRCT domain; the sequence is NLWKCNCHLLGLKLWLEKFVYKGGLTDGIICESPDTWKGKDLLRIPHELYQPCPL. Residues 289 to 309 form a helical membrane-spanning segment; that stretch reads VIITGVVCGIVCLMMLAAAIY. The Cytoplasmic segment spans residues 310–345; it reads GCTYAAITAQYHGGPLAQTNDPGKVEEKERFDSSPA. Residues 326-345 are disordered; it reads AQTNDPGKVEEKERFDSSPA. The segment covering 332 to 345 has biased composition (basic and acidic residues); that stretch reads GKVEEKERFDSSPA.

The protein resides in the membrane. The chain is Leucine-rich repeat and transmembrane domain-containing protein 1 (LRTM1) from Homo sapiens (Human).